The sequence spans 238 residues: Capsular polysaccharide phosphotransferase eps5J (238 aa).

It belongs to the stealth family.

This chain is Capsular polysaccharide phosphotransferase eps5J (eps5J), found in Streptococcus thermophilus.